We begin with the raw amino-acid sequence, 182 residues long: Inosine/xanthosine triphosphatase (182 aa).

It belongs to the YjjX NTPase family. As to quaternary structure, homodimer. Requires Mg(2+) as cofactor. Mn(2+) is required as a cofactor.

It carries out the reaction XTP + H2O = XDP + phosphate + H(+). The enzyme catalyses ITP + H2O = IDP + phosphate + H(+). In terms of biological role, phosphatase that hydrolyzes non-canonical purine nucleotides such as XTP and ITP to their respective diphosphate derivatives. Probably excludes non-canonical purines from DNA/RNA precursor pool, thus preventing their incorporation into DNA/RNA and avoiding chromosomal lesions. The polypeptide is Inosine/xanthosine triphosphatase (Vibrio parahaemolyticus serotype O3:K6 (strain RIMD 2210633)).